We begin with the raw amino-acid sequence, 95 residues long: Small ribosomal subunit protein bS16 (95 aa).

It belongs to the bacterial ribosomal protein bS16 family.

The protein is Small ribosomal subunit protein bS16 of Mycoplasma genitalium (strain ATCC 33530 / DSM 19775 / NCTC 10195 / G37) (Mycoplasmoides genitalium).